A 155-amino-acid polypeptide reads, in one-letter code: Ribosome maturation factor RimP (155 aa).

Belongs to the RimP family.

It is found in the cytoplasm. Its function is as follows. Required for maturation of 30S ribosomal subunits. This Hamiltonella defensa subsp. Acyrthosiphon pisum (strain 5AT) protein is Ribosome maturation factor RimP.